The sequence spans 236 residues: Sugar fermentation stimulation protein homolog (236 aa).

Belongs to the SfsA family.

This is Sugar fermentation stimulation protein homolog from Proteus mirabilis (strain HI4320).